The sequence spans 52 residues: ATP synthase F(1) complex subunit epsilon, mitochondrial (52 aa).

N6-acetyllysine; alternate occurs at positions 21, 32, and 37. N6-succinyllysine; alternate occurs at positions 21, 32, and 37. An N6-acetyllysine modification is found at lysine 44.

It belongs to the eukaryotic ATPase epsilon family. As to quaternary structure, component of the ATP synthase complex composed at least of ATP5F1A/subunit alpha, ATP5F1B/subunit beta, ATP5MC1/subunit c (homooctomer), MT-ATP6/subunit a, MT-ATP8/subunit 8, ATP5ME/subunit e, ATP5MF/subunit f, ATP5MG/subunit g, ATP5MK/subunit k, ATP5MJ/subunit j, ATP5F1C/subunit gamma, ATP5F1D/subunit delta, ATP5F1E/subunit epsilon, ATP5PF/subunit F6, ATP5PB/subunit b, ATP5PD/subunit d, ATP5PO/subunit OSCP. ATP synthase complex consists of a soluble F(1) head domain (subunits alpha(3) and beta(3)) - the catalytic core - and a membrane F(0) domain - the membrane proton channel (subunits c, a, 8, e, f, g, k and j). These two domains are linked by a central stalk (subunits gamma, delta, and epsilon) rotating inside the F1 region and a stationary peripheral stalk (subunits F6, b, d, and OSCP).

It localises to the mitochondrion. The protein resides in the mitochondrion inner membrane. Subunit epsilon, of the mitochondrial membrane ATP synthase complex (F(1)F(0) ATP synthase or Complex V) that produces ATP from ADP in the presence of a proton gradient across the membrane which is generated by electron transport complexes of the respiratory chain. ATP synthase complex consist of a soluble F(1) head domain - the catalytic core - and a membrane F(1) domain - the membrane proton channel. These two domains are linked by a central stalk rotating inside the F(1) region and a stationary peripheral stalk. During catalysis, ATP synthesis in the catalytic domain of F(1) is coupled via a rotary mechanism of the central stalk subunits to proton translocation. In vivo, can only synthesize ATP although its ATP hydrolase activity can be activated artificially in vitro. May be essential for the assembly of F(1) and may play an important role in the incorporation of the hydrophobic subunit c into the F(1)-c oligomer rotor of the mitochondrial ATP synthase complex. The sequence is that of ATP synthase F(1) complex subunit epsilon, mitochondrial from Mus musculus (Mouse).